The chain runs to 209 residues: uncharacterized protein (209 aa).

The next 4 membrane-spanning stretches (helical) occupy residues 21–41 (LAYLNVLWILFSLAGLVVFGL), 81–101 (ILGLIVVTAALFLFADMRIAA), 107–127 (VLVNVFVSISLIFAFVVLYVF), and 159–179 (AAGAVGVLCLVLFHVTFLLFF).

Its subcellular location is the cell membrane. This is an uncharacterized protein from Bacillus subtilis (strain 168).